We begin with the raw amino-acid sequence, 90 residues long: Conotoxin Vc22.1 (90 aa).

A signal peptide spans 1 to 18; sequence MMTRVFLAMFFLLVLTKG.

This sequence belongs to the E superfamily. Contains 4 disulfide bonds. Expressed by the venom duct.

It is found in the secreted. This chain is Conotoxin Vc22.1, found in Conus victoriae (Queen Victoria cone).